The following is a 180-amino-acid chain: Large ribosomal subunit protein uL6 (180 aa).

This sequence belongs to the universal ribosomal protein uL6 family. In terms of assembly, part of the 50S ribosomal subunit.

Functionally, this protein binds to the 23S rRNA, and is important in its secondary structure. It is located near the subunit interface in the base of the L7/L12 stalk, and near the tRNA binding site of the peptidyltransferase center. The sequence is that of Large ribosomal subunit protein uL6 from Borreliella afzelii (strain PKo) (Borrelia afzelii).